The sequence spans 280 residues: Putative pyruvate, phosphate dikinase regulatory protein (280 aa).

An ADP-binding site is contributed by 158-165; the sequence is GVSRTSKT.

The protein belongs to the pyruvate, phosphate/water dikinase regulatory protein family. PDRP subfamily.

It carries out the reaction N(tele)-phospho-L-histidyl/L-threonyl-[pyruvate, phosphate dikinase] + ADP = N(tele)-phospho-L-histidyl/O-phospho-L-threonyl-[pyruvate, phosphate dikinase] + AMP + H(+). The enzyme catalyses N(tele)-phospho-L-histidyl/O-phospho-L-threonyl-[pyruvate, phosphate dikinase] + phosphate + H(+) = N(tele)-phospho-L-histidyl/L-threonyl-[pyruvate, phosphate dikinase] + diphosphate. In terms of biological role, bifunctional serine/threonine kinase and phosphorylase involved in the regulation of the pyruvate, phosphate dikinase (PPDK) by catalyzing its phosphorylation/dephosphorylation. In Lactobacillus johnsonii (strain CNCM I-12250 / La1 / NCC 533), this protein is Putative pyruvate, phosphate dikinase regulatory protein.